The chain runs to 113 residues: uncharacterized protein (113 aa).

The signal sequence occupies residues 1 to 22 (MCRFPTFLLIAIAITMLPTILS). A glycan (N-linked (GlcNAc...) asparagine) is linked at Asn-47.

It localises to the secreted. This is an uncharacterized protein from Caenorhabditis elegans.